A 645-amino-acid chain; its full sequence is MNTEIKYLELLSKTFKNIAETSTEIINLQAIMNLPKGTEHFMTDIHGEYEAFNHVLRNGSGTIRNKIEEAYGNKLTENEKKELASIIYYPKEKVELMQNKDNFNIDRWMITIIYRLIEVCKVVCSKYTRSKVRKAMTKDFEYILQELLYEKKELANKKEYFDSIVDTIISIDRGKEFIIAICNLIQRLNIDHLHIVGDIYDRGPFPHLIMDTLAEYSNLDIQWGNHDILWIGAALGNKACIANVIRICCRYNNNDILEEAYGINLLPFATFAMKYYGDDPCKRFRAKEGVDSDLIAQMHKAMSIIQFKVEGLYSERNPELEMSSRESLKHINYEKGTINLNGVEYPLNDTNFPTVNPENPLELLEEEAELLDKLQASFLGSEKLQKHMQLLFAKGGMYLKYNSNLLFHACIPMEPNGEFSELFVEDGYYKGKALMDKIDNIVRQAYYDRKNVEVNKKHRDFIWYLWAGRLSPLFGKDVMKTFERYFIDDKTTHKEIKNPYHKLINDEKVCDKIFEEFGLNPRTSHIINGHIPVKVKEGESPVKANGKLLIIDGGFSRAYQSTTGIAGYTLTYNSYGMKLASHLKFISKEAAIKDGTDMISSHIIVETKSKRMKVKDTDIGKSIQTQINDLKKLLKAYRIGLIKSN.

Belongs to the FBPase class 3 family. It depends on Mn(2+) as a cofactor.

The enzyme catalyses beta-D-fructose 1,6-bisphosphate + H2O = beta-D-fructose 6-phosphate + phosphate. Its pathway is carbohydrate biosynthesis; gluconeogenesis. This Fusobacterium nucleatum subsp. nucleatum (strain ATCC 25586 / DSM 15643 / BCRC 10681 / CIP 101130 / JCM 8532 / KCTC 2640 / LMG 13131 / VPI 4355) protein is Fructose-1,6-bisphosphatase class 3.